The chain runs to 393 residues: ATP phosphoribosyltransferase regulatory subunit (393 aa).

The protein belongs to the class-II aminoacyl-tRNA synthetase family. HisZ subfamily. As to quaternary structure, heteromultimer composed of HisG and HisZ subunits.

It is found in the cytoplasm. The protein operates within amino-acid biosynthesis; L-histidine biosynthesis; L-histidine from 5-phospho-alpha-D-ribose 1-diphosphate: step 1/9. Functionally, required for the first step of histidine biosynthesis. May allow the feedback regulation of ATP phosphoribosyltransferase activity by histidine. The sequence is that of ATP phosphoribosyltransferase regulatory subunit from Synechococcus sp. (strain RCC307).